We begin with the raw amino-acid sequence, 354 residues long: mRNA cap guanine-N(7) methyltransferase 2 (354 aa).

The mRNA cap 0 methyltransferase domain maps to 8–286 (KPEQSHHRLF…LYATFIFQKP (279 aa)). S-adenosyl-L-methionine-binding positions include Lys21, Asp61, and 88–89 (DP).

Belongs to the class I-like SAM-binding methyltransferase superfamily. mRNA cap 0 methyltransferase family.

The protein localises to the nucleus. It catalyses the reaction a 5'-end (5'-triphosphoguanosine)-ribonucleoside in mRNA + S-adenosyl-L-methionine = a 5'-end (N(7)-methyl 5'-triphosphoguanosine)-ribonucleoside in mRNA + S-adenosyl-L-homocysteine. In terms of biological role, mRNA capping methyltransferase that methylates the N7 position of the added guanosine to the 5'-cap structure of mRNAs. Binds RNA containing 5'-terminal GpppC. The chain is mRNA cap guanine-N(7) methyltransferase 2 from Arabidopsis thaliana (Mouse-ear cress).